Consider the following 234-residue polypeptide: 2,3-bisphosphoglycerate-dependent phosphoglycerate mutase 1 (234 aa).

Substrate-binding positions include 14–21 (RHGQSIWN), 27–28 (TG), arginine 66, and 93–96 (ERHY). The Tele-phosphohistidine intermediate role is filled by histidine 15. Glutamate 93 acts as the Proton donor/acceptor in catalysis.

This sequence belongs to the phosphoglycerate mutase family. BPG-dependent PGAM subfamily. As to quaternary structure, homodimer.

The enzyme catalyses (2R)-2-phosphoglycerate = (2R)-3-phosphoglycerate. It participates in carbohydrate degradation; glycolysis; pyruvate from D-glyceraldehyde 3-phosphate: step 3/5. In terms of biological role, catalyzes the interconversion of 2-phosphoglycerate and 3-phosphoglycerate. The chain is 2,3-bisphosphoglycerate-dependent phosphoglycerate mutase 1 from Nitrosomonas europaea (strain ATCC 19718 / CIP 103999 / KCTC 2705 / NBRC 14298).